The chain runs to 129 residues: Phosphoribosyl-AMP cyclohydrolase (129 aa).

D94 is a binding site for Mg(2+). Position 95 (C95) interacts with Zn(2+). Residues D96 and D98 each contribute to the Mg(2+) site. 2 residues coordinate Zn(2+): C111 and C118.

This sequence belongs to the PRA-CH family. Homodimer. Mg(2+) is required as a cofactor. Requires Zn(2+) as cofactor.

It is found in the cytoplasm. The catalysed reaction is 1-(5-phospho-beta-D-ribosyl)-5'-AMP + H2O = 1-(5-phospho-beta-D-ribosyl)-5-[(5-phospho-beta-D-ribosylamino)methylideneamino]imidazole-4-carboxamide. The protein operates within amino-acid biosynthesis; L-histidine biosynthesis; L-histidine from 5-phospho-alpha-D-ribose 1-diphosphate: step 3/9. In terms of biological role, catalyzes the hydrolysis of the adenine ring of phosphoribosyl-AMP. In Corynebacterium efficiens (strain DSM 44549 / YS-314 / AJ 12310 / JCM 11189 / NBRC 100395), this protein is Phosphoribosyl-AMP cyclohydrolase.